A 251-amino-acid chain; its full sequence is 3-deoxy-manno-octulosonate cytidylyltransferase (251 aa).

This sequence belongs to the KdsB family.

The protein localises to the cytoplasm. It catalyses the reaction 3-deoxy-alpha-D-manno-oct-2-ulosonate + CTP = CMP-3-deoxy-beta-D-manno-octulosonate + diphosphate. It functions in the pathway nucleotide-sugar biosynthesis; CMP-3-deoxy-D-manno-octulosonate biosynthesis; CMP-3-deoxy-D-manno-octulosonate from 3-deoxy-D-manno-octulosonate and CTP: step 1/1. Its pathway is bacterial outer membrane biogenesis; lipopolysaccharide biosynthesis. Its function is as follows. Activates KDO (a required 8-carbon sugar) for incorporation into bacterial lipopolysaccharide in Gram-negative bacteria. The protein is 3-deoxy-manno-octulosonate cytidylyltransferase of Chromobacterium violaceum (strain ATCC 12472 / DSM 30191 / JCM 1249 / CCUG 213 / NBRC 12614 / NCIMB 9131 / NCTC 9757 / MK).